Consider the following 310-residue polypeptide: Aspartate carbamoyltransferase catalytic subunit (310 aa).

Positions 58 and 59 each coordinate carbamoyl phosphate. Lys-86 contributes to the L-aspartate binding site. Residues Arg-108, His-136, and Gln-139 each coordinate carbamoyl phosphate. L-aspartate contacts are provided by Arg-169 and Arg-224. The carbamoyl phosphate site is built by Gly-265 and Pro-266.

This sequence belongs to the aspartate/ornithine carbamoyltransferase superfamily. ATCase family. In terms of assembly, heterododecamer (2C3:3R2) of six catalytic PyrB chains organized as two trimers (C3), and six regulatory PyrI chains organized as three dimers (R2).

It catalyses the reaction carbamoyl phosphate + L-aspartate = N-carbamoyl-L-aspartate + phosphate + H(+). Its pathway is pyrimidine metabolism; UMP biosynthesis via de novo pathway; (S)-dihydroorotate from bicarbonate: step 2/3. Catalyzes the condensation of carbamoyl phosphate and aspartate to form carbamoyl aspartate and inorganic phosphate, the committed step in the de novo pyrimidine nucleotide biosynthesis pathway. This Geobacter sp. (strain M21) protein is Aspartate carbamoyltransferase catalytic subunit.